Here is a 627-residue protein sequence, read N- to C-terminus: Phosphomethylpyrimidine synthase (627 aa).

Residues Asn-233, Met-262, Tyr-291, His-327, 347 to 349 (SRG), 388 to 391 (DGLR), and Glu-427 each bind substrate. His-431 is a Zn(2+) binding site. Substrate is bound at residue Tyr-454. His-495 contributes to the Zn(2+) binding site. Residues Cys-575, Cys-578, and Cys-583 each coordinate [4Fe-4S] cluster.

The protein belongs to the ThiC family. In terms of assembly, homodimer. The cofactor is [4Fe-4S] cluster.

It carries out the reaction 5-amino-1-(5-phospho-beta-D-ribosyl)imidazole + S-adenosyl-L-methionine = 4-amino-2-methyl-5-(phosphooxymethyl)pyrimidine + CO + 5'-deoxyadenosine + formate + L-methionine + 3 H(+). The protein operates within cofactor biosynthesis; thiamine diphosphate biosynthesis. Functionally, catalyzes the synthesis of the hydroxymethylpyrimidine phosphate (HMP-P) moiety of thiamine from aminoimidazole ribotide (AIR) in a radical S-adenosyl-L-methionine (SAM)-dependent reaction. The protein is Phosphomethylpyrimidine synthase of Acidithiobacillus ferrooxidans (strain ATCC 23270 / DSM 14882 / CIP 104768 / NCIMB 8455) (Ferrobacillus ferrooxidans (strain ATCC 23270)).